The following is a 347-amino-acid chain: Nicotinate-nucleotide--dimethylbenzimidazole phosphoribosyltransferase (347 aa).

The active-site Proton acceptor is Glu-316.

The protein belongs to the CobT family.

It catalyses the reaction 5,6-dimethylbenzimidazole + nicotinate beta-D-ribonucleotide = alpha-ribazole 5'-phosphate + nicotinate + H(+). It participates in nucleoside biosynthesis; alpha-ribazole biosynthesis; alpha-ribazole from 5,6-dimethylbenzimidazole: step 1/2. In terms of biological role, catalyzes the synthesis of alpha-ribazole-5'-phosphate from nicotinate mononucleotide (NAMN) and 5,6-dimethylbenzimidazole (DMB). This is Nicotinate-nucleotide--dimethylbenzimidazole phosphoribosyltransferase from Vibrio campbellii (strain ATCC BAA-1116).